The primary structure comprises 1121 residues: MSQTLLDSLNQKELTETSCTIEIQAAFILSSLATFFGGLIILFLFRIALKSSRSWKYVKGPRGLLELFSSRRIEANPLRKLYFHGVFRQRIEMLLSAQTVVGQVLVILVFVLSIGSLVIYFINSMDPVRRCSSYEDKIVHVDLSFNAFFSFYFGLRFWAAEDKIKFWLEMNSIVDIFTIPPTFISYYLKSNWLGLRFLRALRLLELPKILQILQVIKTSNSVKLSKLLSIVISTWFTAAGFLHLVENSGDPWLNGRNSQTMSYFESIYLVTATMSTVGFGDVVAKTSLGRIFIVFFTLGSLILFANYIPEMVELFSTRKKYTKPYEAVKGKKFIVVCGNITVDSVTAFLRNFLHWKSGEINIEIVFLGETLPCLELETLLKCHTSCTNFVCGTALKFEDLKRVAVENSEACLILANHFCSDLHDEDNSNIMRVLSIKNYYPQTRVIIQILQSQNKVFLSKIPNWDWSAGDNILCFAELKLGFIAQGCLVPGLCTFLTTLFIEQNQKVFPKHPWQKHFLNGLKNKILTQRLSNDFVGMTFPQVSRLCFVKLNLMLIAIQHKPFFHSCCTLILNPSSQVRLNKDTLGFFIADSSKAVKRAFFYCSNCHSDVCNPELIGKCNCKIKSRQQLIAPTIMVMKSSLTDFTTSSHIHASMSTEIHTCFSREQPSLITITTNRPTTNDTVDDTDMLDSSGMFHWCRAMPLDKVVLKRSEKAKHEFQNHIVVCVFGDAQCTLVGLRNFVMPLRASNYTRQELKDIVFIGSLEYFQREWRFLRNFPKIHIMPGSALYMGDLIAVNVEQCSMCVILATPYKALSSQILVDTEAIMATLNIQSLRITSPTPGSSKSEVKPSSAFDSKERKQRYKQIPILTELKNPSNIHFIEQMGGLDGMLKGTSLHLSTSFSTGAVFSDTFLDSLLATSFYNYHVVELLQMLVTGGISSEMEHYLVKEKPYKTTDDYEAIKSGRTRCKLGLLSLDQTVLSGINPRKTFGQLFCGSLDNFGILCVGLYRMIDEEEPSQEHKRFVITRPSNECHLLPSDLVFCAIPFNTTCGKSDSSPSIQAQNNSTNATTPLAQGSNFFDSHHADESHDLYPVDDTGERWSQHHHSRVYPLDTLDASDIVQEK.

Over 1-24 (MSQTLLDSLNQKELTETSCTIEIQ) the chain is Extracellular. Residues 25 to 45 (AAFILSSLATFFGGLIILFLF) form a helical membrane-spanning segment. Residues 46 to 101 (RIALKSSRSWKYVKGPRGLLELFSSRRIEANPLRKLYFHGVFRQRIEMLLSAQTVV) are Cytoplasmic-facing. A helical membrane pass occupies residues 102–122 (GQVLVILVFVLSIGSLVIYFI). The Extracellular portion of the chain corresponds to 123-137 (NSMDPVRRCSSYEDK). The helical transmembrane segment at 138 to 158 (IVHVDLSFNAFFSFYFGLRFW) threads the bilayer. Residues 159 to 165 (AAEDKIK) are Cytoplasmic-facing. The chain crosses the membrane as a helical span at residues 166-186 (FWLEMNSIVDIFTIPPTFISY). Residues 187 to 188 (YL) lie on the Extracellular side of the membrane. Residues 189–209 (KSNWLGLRFLRALRLLELPKI) traverse the membrane as a helical; Voltage-sensor segment. The Cytoplasmic portion of the chain corresponds to 210–226 (LQILQVIKTSNSVKLSK). A helical transmembrane segment spans residues 227–247 (LLSIVISTWFTAAGFLHLVEN). At 248–259 (SGDPWLNGRNSQ) the chain is on the extracellular side. The pore-forming intramembrane region spans 260 to 282 (TMSYFESIYLVTATMSTVGFGDV). A Selectivity for potassium motif is present at residues 276–279 (TVGF). The Extracellular portion of the chain corresponds to 283–290 (VAKTSLGR). Residues 291-311 (IFIVFFTLGSLILFANYIPEM) traverse the membrane as a helical segment. The Cytoplasmic segment spans residues 312-1121 (VELFSTRKKY…LDASDIVQEK (810 aa)). RCK N-terminal domains follow at residues 331 to 473 (KKFI…DNIL) and 718 to 889 (QNHI…DGML). 2 disordered regions span residues 836–858 (SPTPGSSKSEVKPSSAFDSKERK) and 1052–1076 (DSSPSIQAQNNSTNATTPLAQGSNF).

It belongs to the potassium channel family. Calcium-activated (TC 1.A.1.3) subfamily. KCa5.1/KCNU1 sub-subfamily. As to quaternary structure, homotetramer; which constitutes the calcium-activated potassium channel. Interact with LRRC52; this interaction changes some channel gating properties, such as shifting gating to more negative potentials at a given pH. In terms of tissue distribution, testis-specific. Mainly expressed in spermatocytes. Expressed in testis, brain, eye and kidney.

The protein localises to the cell membrane. Its subcellular location is the cytoplasm. It carries out the reaction K(+)(in) = K(+)(out). With respect to regulation, regulated by changes in cytosolic pH; activated by alkalization. In contrast to human KCNU1 is not activated by Ca(2+) or Mg(2+). The auxiliary subunit LRRC52 shifts the activation of KCNU1 to more negative potentials at a given pH. In terms of biological role, testis-specific potassium channel activated by both intracellular pH and membrane voltage that mediates export of K(+). Represents the primary spermatozoan K(+) current. The channel underlies a pH-triggered membrane hyperpolarization during the process of sperm capacitation, as sperm encounter the alkaline environment near the ovum in the female reproductive tract, thereby playing an essential for male fertility. The chain is Potassium channel subfamily U member 1 (Kcnu1) from Mus musculus (Mouse).